Reading from the N-terminus, the 444-residue chain is Methylenetetrahydrofolate--tRNA-(uracil-5-)-methyltransferase TrmFO (444 aa).

Glycine 10–glycine 15 serves as a coordination point for FAD.

This sequence belongs to the MnmG family. TrmFO subfamily. Requires FAD as cofactor.

The protein resides in the cytoplasm. It carries out the reaction uridine(54) in tRNA + (6R)-5,10-methylene-5,6,7,8-tetrahydrofolate + NADH + H(+) = 5-methyluridine(54) in tRNA + (6S)-5,6,7,8-tetrahydrofolate + NAD(+). The enzyme catalyses uridine(54) in tRNA + (6R)-5,10-methylene-5,6,7,8-tetrahydrofolate + NADPH + H(+) = 5-methyluridine(54) in tRNA + (6S)-5,6,7,8-tetrahydrofolate + NADP(+). Catalyzes the folate-dependent formation of 5-methyl-uridine at position 54 (M-5-U54) in all tRNAs. In Streptococcus agalactiae serotype III (strain NEM316), this protein is Methylenetetrahydrofolate--tRNA-(uracil-5-)-methyltransferase TrmFO.